The following is a 1131-amino-acid chain: Plasma membrane ATPase (1131 aa).

6 helical membrane-spanning segments follow: residues 77–97 (PVLVFLGYMWNPLAWAMEAAA), 98–118 (IISIALLDVADFVLIVGLLLI), 151–171 (GAIVTIDAVNLVPGDVILIRL), 231–251 (AVVYATGVNTFFGRAAALISG), 265–285 (MSAICIVTILLWVVVELAVQF), and 305–325 (MLVVLVGGIPIAMPTVLSVTL). The active-site 4-aspartylphosphate intermediate is D357. Residues D615 and D619 each coordinate Mg(2+). Helical transmembrane passes span 642–662 (AADIVLTEPGLSTIVTAVIGA), 689–709 (LITVIYDWYFPTILIVIMAVF), 733–753 (ITNIFIMGMVYGLYLTLSTWA), 884–904 (LAFFFAQVGATLFGIFGLGGF), and 946–966 (VIGCGGYVIVAWIWSAIWYVL). Residues 994-1010 (KRSLDRRSKDDIGDKEF) are compositionally biased toward basic and acidic residues. Disordered stretches follow at residues 994-1023 (KRSLDRRSKDDIGDKEFTGPSGMVPANYSN) and 1067-1131 (RRSM…TIRE). Over residues 1089–1100 (SRTSNTLSTGSK) the composition is skewed to polar residues. Residues 1118–1131 (IKPDKYDFASTIRE) show a composition bias toward basic and acidic residues.

It belongs to the cation transport ATPase (P-type) (TC 3.A.3) family. Type IIIA subfamily.

It is found in the cell membrane. The enzyme catalyses ATP + H2O + H(+)(in) = ADP + phosphate + 2 H(+)(out). The plasma membrane ATPase of plants and fungi is a hydrogen ion pump. The proton gradient it generates drives the active transport of nutrients by H(+)-symport. The resulting external acidification and/or internal alkinization may mediate growth responses. In Dunaliella bioculata (Green alga), this protein is Plasma membrane ATPase (PMA1).